A 103-amino-acid chain; its full sequence is Co-chaperonin GroES (103 aa).

The protein belongs to the GroES chaperonin family. In terms of assembly, heptamer of 7 subunits arranged in a ring. Interacts with the chaperonin GroEL.

The protein localises to the cytoplasm. In terms of biological role, together with the chaperonin GroEL, plays an essential role in assisting protein folding. The GroEL-GroES system forms a nano-cage that allows encapsulation of the non-native substrate proteins and provides a physical environment optimized to promote and accelerate protein folding. GroES binds to the apical surface of the GroEL ring, thereby capping the opening of the GroEL channel. The sequence is that of Co-chaperonin GroES from Microcystis aeruginosa (strain NIES-843 / IAM M-2473).